The sequence spans 2206 residues: Genome polyprotein (2206 aa).

Residue Gly-2 is the site of N-myristoyl glycine; by host attachment. Topologically, residues 2-1517 are cytoplasmic; the sequence is GAQVSSQKVG…NINRAMTILQ (1516 aa). Amphipathic alpha-helix regions lie at residues 579–599 and 579–603; these read GIED…LPKQ and GIED…QDSL. Residues His-898 and Asp-916 each act as for protease 2A activity in the active site. 2 residues coordinate Zn(2+): Cys-933 and Cys-935. Cys-987 functions as the For protease 2A activity in the catalytic mechanism. The Zn(2+) site is built by Cys-993 and His-995. The membrane-binding stretch occupies residues 1125–1197; sequence GDSWLKKFTE…HQSCPSQEHQ (73 aa). An oligomerization region spans residues 1125 to 1263; it reads GDSWLKKFTE…SPGTGKSVAT (139 aa). Residues 1146–1150 are RNA-binding; that stretch reads SNKIS. The 157-residue stretch at 1229-1385 folds into the SF3 helicase domain; sequence EHTINNYIQF…GEYSRDGKLN (157 aa). 1253-1260 provides a ligand contact to ATP; sequence GSPGTGKS. Zn(2+) contacts are provided by Cys-1393, Cys-1396, Cys-1405, and Cys-1410. Residues 1393–1410 form a C4-type zinc finger; it reads CKDCHQPANFKRCCPLVC. The RNA-binding stretch occupies residues 1437–1444; it reads ERNRRSNI. The interval 1448–1453 is oligomerization; it reads MEALFQ. Residues 1518–1533 lie within the membrane without spanning it; sequence AVTTFAAVAGVVYVMY. Over 1534–2206 the chain is Cytoplasmic; it reads KLFAGHQGAY…TLYRRWLDSF (673 aa). Tyr-1543 is subject to O-(5'-phospho-RNA)-tyrosine. The Peptidase C3 domain occupies 1563–1741; that stretch reads GPGFDYAVAM…FAAALKRSYF (179 aa). Catalysis depends on for protease 3C activity residues His-1602, Glu-1633, and Cys-1709. The RdRp catalytic domain maps to 1972-2087; sequence EKLFAFDYTG…SYPHEVDASL (116 aa). Residues Asp-1978 and Asp-2073 each coordinate Mg(2+).

The protein belongs to the picornaviruses polyprotein family. In terms of assembly, interacts with capsid protein VP1 and capsid protein VP3 to form heterotrimeric protomers. Interacts with capsid protein VP0, and capsid protein VP3 to form heterotrimeric protomers. Interacts with human PVR. Five protomers subsequently associate to form pentamers which serve as building blocks for the capsid. Interacts with capsid protein VP2, capsid protein VP3 and capsid protein VP4 following cleavage of capsid protein VP0. As to quaternary structure, interacts with capsid protein VP1 and capsid protein VP3 in the mature capsid. In terms of assembly, interacts with capsid protein VP0 and capsid protein VP1 to form heterotrimeric protomers. Five protomers subsequently associate to form pentamers which serve as building blocks for the capsid. Interacts with capsid protein VP4 in the mature capsid. Interacts with protein 2C; this interaction may be important for virion morphogenesis. Interacts with capsid protein VP1 and capsid protein VP3. As to quaternary structure, homodimer. In terms of assembly, homohexamer; forms a hexameric ring structure with 6-fold symmetry characteristic of AAA+ ATPases. Interacts (via N-terminus) with host RTN3 (via reticulon domain); this interaction is important for viral replication. Interacts with capsid protein VP3; this interaction may be important for virion morphogenesis. Interacts with protein 3CD. As to quaternary structure, homodimer. Interacts with host GBF1. Interacts (via GOLD domain) with host ACBD3 (via GOLD domain); this interaction allows the formation of a viral protein 3A/ACBD3 heterotetramer with a 2:2 stoichiometry, which will stimulate the recruitment of host PI4KB in order to synthesize PI4P at the viral RNA replication sites. In terms of assembly, interacts with RNA-directed RNA polymerase. Interacts with protein 3AB and with RNA-directed RNA polymerase. As to quaternary structure, interacts with Viral protein genome-linked and with protein 3CD. Mg(2+) serves as cofactor. Specific enzymatic cleavages in vivo by the viral proteases yield processing intermediates and the mature proteins. In terms of processing, myristoylation is required for the formation of pentamers during virus assembly. Further assembly of 12 pentamers and a molecule of genomic RNA generates the provirion. Post-translationally, during virion maturation, immature virions are rendered infectious following cleavage of VP0 into VP4 and VP2. This maturation seems to be an autocatalytic event triggered by the presence of RNA in the capsid and it is followed by a conformational change infectious virion. Myristoylation is required during RNA encapsidation and formation of the mature virus particle. In terms of processing, VPg is uridylylated by the polymerase into VPg-pUpU. This acts as a nucleotide-peptide primer for the genomic RNA replication.

The protein localises to the virion. The protein resides in the host cytoplasm. Its subcellular location is the host cytoplasmic vesicle membrane. It is found in the host nucleus. It carries out the reaction a ribonucleoside 5'-triphosphate + H2O = a ribonucleoside 5'-diphosphate + phosphate + H(+). It catalyses the reaction Selective cleavage of Tyr-|-Gly bond in the picornavirus polyprotein.. The enzyme catalyses RNA(n) + a ribonucleoside 5'-triphosphate = RNA(n+1) + diphosphate. The catalysed reaction is Selective cleavage of Gln-|-Gly bond in the poliovirus polyprotein. In other picornavirus reactions Glu may be substituted for Gln, and Ser or Thr for Gly.. Its activity is regulated as follows. Replication or transcription is subject to high level of random mutations by the nucleotide analog ribavirin. In terms of biological role, forms an icosahedral capsid of pseudo T=3 symmetry with capsid proteins VP2 and VP3. The capsid is 300 Angstroms in diameter, composed of 60 copies of each capsid protein and enclosing the viral positive strand RNA genome. Capsid protein VP1 mainly forms the vertices of the capsid. Capsid protein VP1 interacts with host cell receptor PVR to provide virion attachment to target host cells. This attachment induces virion internalization predominantly through clathrin- and caveolin-independent endocytosis in Hela cells and through caveolin-mediated endocytosis in brain microvascular endothelial cells. Tyrosine kinases are probably involved in the entry process. Virus binding to PVR induces increased junctional permeability and rearrangement of junctional proteins. Modulation of endothelial tight junctions, as well as cytolytic infection of endothelial cells themselves, may result in loss of endothelial integrity which may help the virus to reach the CNS. After binding to its receptor, the capsid undergoes conformational changes. Capsid protein VP1 N-terminus (that contains an amphipathic alpha-helix) and capsid protein VP4 are externalized. Together, they shape a pore in the host membrane through which viral genome is translocated to host cell cytoplasm. Forms an icosahedral capsid of pseudo T=3 symmetry with capsid proteins VP2 and VP3. The capsid is 300 Angstroms in diameter, composed of 60 copies of each capsid protein and enclosing the viral positive strand RNA genome. Functionally, lies on the inner surface of the capsid shell. After binding to the host receptor, the capsid undergoes conformational changes. Capsid protein VP4 is released, Capsid protein VP1 N-terminus is externalized, and together, they shape a pore in the host membrane through which the viral genome is translocated into the host cell cytoplasm. Its function is as follows. Component of immature procapsids, which is cleaved into capsid proteins VP4 and VP2 after maturation. Allows the capsid to remain inactive before the maturation step. In terms of biological role, cysteine protease that cleaves viral polyprotein and specific host proteins. It is responsible for the autocatalytic cleavage between the P1 and P2 regions, which is the first cleavage occurring in the polyprotein. Also cleaves the host translation initiation factor EIF4G1, in order to shut down the capped cellular mRNA translation. Inhibits the host nucleus-cytoplasm protein and RNA trafficking by cleaving host members of the nuclear pores including NUP98, NUP62 and NUP153. Counteracts stress granule formation probably by antagonizing its assembly or promoting its dissassembly. Cleaves and inhibits host IFIH1/MDA5, thereby inhibiting the type-I IFN production and the establishment of the antiviral state. Cleaves and inhibits host MAVS, thereby inhibiting the type-I IFN production and the establishment of the antiviral state. Plays an essential role in the virus replication cycle by acting as a viroporin. Creates a pore in the host endoplasmic reticulum and as a consequence releases Ca2+ in the cytoplasm of infected cell. In turn, high levels of cytoplasmic calcium may trigger membrane trafficking and transport of viral ER-associated proteins to viroplasms, sites of viral genome replication. Functionally, induces and associates with structural rearrangements of intracellular membranes. Displays RNA-binding, nucleotide binding and NTPase activities. May play a role in virion morphogenesis and viral RNA encapsidation by interacting with the capsid protein VP3. Its function is as follows. Localizes the viral replication complex to the surface of membranous vesicles. Together with protein 3CD binds the Cis-Active RNA Element (CRE) which is involved in RNA synthesis initiation. Acts as a cofactor to stimulate the activity of 3D polymerase, maybe through a nucleid acid chaperone activity. In terms of biological role, localizes the viral replication complex to the surface of membranous vesicles. It inhibits host cell endoplasmic reticulum-to-Golgi apparatus transport and causes the disassembly of the Golgi complex, possibly through GBF1 interaction. This would result in depletion of MHC, trail receptors and IFN receptors at the host cell surface. Plays an essential role in viral RNA replication by recruiting ACBD3 and PI4KB at the viral replication sites, thereby allowing the formation of the rearranged membranous structures where viral replication takes place. Acts as a primer for viral RNA replication and remains covalently bound to viral genomic RNA. VPg is uridylylated prior to priming replication into VPg-pUpU. The oriI viral genomic sequence may act as a template for this. The VPg-pUpU is then used as primer on the genomic RNA poly(A) by the RNA-dependent RNA polymerase to replicate the viral genome. During genome replication, the VPg-RNA linkage is removed by the host TDP2, thereby accelerating replication. During the late stage of the replication cycle, host TDP2 is excluded from sites of viral RNA synthesis and encapsidation, allowing for the generation of progeny virions. Functionally, involved in the viral replication complex and viral polypeptide maturation. It exhibits protease activity with a specificity and catalytic efficiency that is different from protease 3C. Protein 3CD lacks polymerase activity. Protein 3CD binds to the 5'UTR of the viral genome. Its function is as follows. Major viral protease that mediates proteolytic processing of the polyprotein. Cleaves host EIF5B, contributing to host translation shutoff. Also cleaves host PABPC1, contributing to host translation shutoff. Cleaves host RIGI and thus contributes to the inhibition of type I interferon production. Cleaves host NLRP1, triggers host N-glycine-mediated degradation of the autoinhibitory NLRP1 N-terminal fragment. Inhibits the integrated stress response (ISR) in the infected cell by cleaving host G3BP1. Stress granule formation is thus inhibited, which allows protein synthesis and viral replication. In terms of biological role, replicates the viral genomic RNA on the surface of intracellular membranes. May form linear arrays of subunits that propagate along a strong head-to-tail interaction called interface-I. Covalently attaches UMP to a tyrosine of VPg, which is used to prime RNA synthesis. The positive stranded RNA genome is first replicated at virus induced membranous vesicles, creating a dsRNA genomic replication form. This dsRNA is then used as template to synthesize positive stranded RNA genomes. ss(+)RNA genomes are either translated, replicated or encapsidated. In Poliovirus type 3 (strains P3/Leon/37 and P3/Leon 12A[1]B), this protein is Genome polyprotein.